A 122-amino-acid chain; its full sequence is Acidic phospholipase A2 4 (122 aa).

Intrachain disulfides connect C26–C115, C28–C44, C43–C95, C49–C122, C50–C88, C57–C81, and C75–C86. Ca(2+) is bound by residues F27, G29, and G31. H47 is an active-site residue. Residue D48 coordinates Ca(2+). The active site involves D89.

The protein belongs to the phospholipase A2 family. Group II subfamily. D49 sub-subfamily. It depends on Ca(2+) as a cofactor. In terms of tissue distribution, expressed by the venom gland.

The protein resides in the secreted. The catalysed reaction is a 1,2-diacyl-sn-glycero-3-phosphocholine + H2O = a 1-acyl-sn-glycero-3-phosphocholine + a fatty acid + H(+). Its function is as follows. Snake venom phospholipase A2 (PLA2) that has high lipolytic activity. PLA2 catalyzes the calcium-dependent hydrolysis of the 2-acyl groups in 3-sn-phosphoglycerides. This chain is Acidic phospholipase A2 4, found in Craspedocephalus gramineus (Bamboo pit viper).